Consider the following 459-residue polypeptide: Cysteine--tRNA ligase (459 aa).

Cysteine 28 provides a ligand contact to Zn(2+). Positions 30-40 match the 'HIGH' region motif; it reads VTVYDLCHIGH. 3 residues coordinate Zn(2+): cysteine 209, histidine 234, and glutamate 238. A 'KMSKS' region motif is present at residues 266–270; it reads KMSKS. Residue lysine 269 coordinates ATP.

This sequence belongs to the class-I aminoacyl-tRNA synthetase family. In terms of assembly, monomer. Requires Zn(2+) as cofactor.

It localises to the cytoplasm. The enzyme catalyses tRNA(Cys) + L-cysteine + ATP = L-cysteinyl-tRNA(Cys) + AMP + diphosphate. In Shewanella oneidensis (strain ATCC 700550 / JCM 31522 / CIP 106686 / LMG 19005 / NCIMB 14063 / MR-1), this protein is Cysteine--tRNA ligase.